Consider the following 258-residue polypeptide: Imidazole glycerol phosphate synthase subunit HisF (258 aa).

Catalysis depends on residues Asp-12 and Asp-131.

Belongs to the HisA/HisF family. As to quaternary structure, heterodimer of HisH and HisF.

The protein resides in the cytoplasm. It catalyses the reaction 5-[(5-phospho-1-deoxy-D-ribulos-1-ylimino)methylamino]-1-(5-phospho-beta-D-ribosyl)imidazole-4-carboxamide + L-glutamine = D-erythro-1-(imidazol-4-yl)glycerol 3-phosphate + 5-amino-1-(5-phospho-beta-D-ribosyl)imidazole-4-carboxamide + L-glutamate + H(+). It participates in amino-acid biosynthesis; L-histidine biosynthesis; L-histidine from 5-phospho-alpha-D-ribose 1-diphosphate: step 5/9. IGPS catalyzes the conversion of PRFAR and glutamine to IGP, AICAR and glutamate. The HisF subunit catalyzes the cyclization activity that produces IGP and AICAR from PRFAR using the ammonia provided by the HisH subunit. This is Imidazole glycerol phosphate synthase subunit HisF from Sinorhizobium medicae (strain WSM419) (Ensifer medicae).